Here is a 418-residue protein sequence, read N- to C-terminus: MIFDKGNVEDFDKELWDAIHAEEERQEHHIELIASENMVSKAVMAAQGSVLTNKYAEGYPGNRYYGGTECVDIVETLAIERAKKLFGAAFANVQAHSGSQANAAAYMALIEAGDTVLGMDLAAGGHLTHGSPVNFSGKTYHFVGYSVDADTEMLNYEAILEQAKAVQPKLIVAGASAYSRSIDFEKFRAIADHVGAYLMVDMAHIAGLVAAGVHPSPVPYAHIVTSTTHKTLRGPRGGLILTNDEALAKKINSAIFPGLQGGPLEHVIAAKAVAFKEALDPAFKDYAQAIIDNTAAMAAVFAQDDRFRLISGGTDNHVFLVDVTKVIANGKLAQNLLDEVNITLNKNAIPFETLSPFKTSGIRIGCAAITSRGMGVKESQTIARLIIKALVNHDQETILEEVRQEVRQLTDAFPLYKK.

(6S)-5,6,7,8-tetrahydrofolate-binding positions include L121 and 125–127; that span reads GHL. K230 bears the N6-(pyridoxal phosphate)lysine mark. (6S)-5,6,7,8-tetrahydrofolate is bound at residue 355 to 357; sequence SPF.

It belongs to the SHMT family. As to quaternary structure, homodimer. It depends on pyridoxal 5'-phosphate as a cofactor.

The protein resides in the cytoplasm. It carries out the reaction (6R)-5,10-methylene-5,6,7,8-tetrahydrofolate + glycine + H2O = (6S)-5,6,7,8-tetrahydrofolate + L-serine. Its pathway is one-carbon metabolism; tetrahydrofolate interconversion. It functions in the pathway amino-acid biosynthesis; glycine biosynthesis; glycine from L-serine: step 1/1. Its function is as follows. Catalyzes the reversible interconversion of serine and glycine with tetrahydrofolate (THF) serving as the one-carbon carrier. This reaction serves as the major source of one-carbon groups required for the biosynthesis of purines, thymidylate, methionine, and other important biomolecules. Also exhibits THF-independent aldolase activity toward beta-hydroxyamino acids, producing glycine and aldehydes, via a retro-aldol mechanism. This is Serine hydroxymethyltransferase from Streptococcus pyogenes serotype M5 (strain Manfredo).